The primary structure comprises 77 residues: uncharacterized protein (77 aa).

This is an uncharacterized protein from Dictyostelium discoideum (Social amoeba).